A 311-amino-acid polypeptide reads, in one-letter code: HPr kinase/phosphorylase (311 aa).

Active-site residues include His-139 and Lys-160. 154–161 (GASGVGKS) lines the ATP pocket. Position 161 (Ser-161) interacts with Mg(2+). Asp-178 acts as the Proton acceptor; for phosphorylation activity. Proton donor; for dephosphorylation activity in catalysis. An important for the catalytic mechanism of both phosphorylation and dephosphorylation region spans residues 202–211 (LEIRGIGIID). Glu-203 contributes to the Mg(2+) binding site. Arg-244 is a catalytic residue. The tract at residues 265 to 270 (PVRPGR) is important for the catalytic mechanism of dephosphorylation.

Belongs to the HPrK/P family. In terms of assembly, homohexamer. The cofactor is Mg(2+).

It catalyses the reaction [HPr protein]-L-serine + ATP = [HPr protein]-O-phospho-L-serine + ADP + H(+). It carries out the reaction [HPr protein]-O-phospho-L-serine + phosphate + H(+) = [HPr protein]-L-serine + diphosphate. Functionally, catalyzes the ATP- as well as the pyrophosphate-dependent phosphorylation of a specific serine residue in HPr, a phosphocarrier protein of the phosphoenolpyruvate-dependent sugar phosphotransferase system (PTS). HprK/P also catalyzes the pyrophosphate-producing, inorganic phosphate-dependent dephosphorylation (phosphorolysis) of seryl-phosphorylated HPr (P-Ser-HPr). The two antagonistic activities of HprK/P are regulated by several intracellular metabolites, which change their concentration in response to the absence or presence of rapidly metabolisable carbon sources (glucose, fructose, etc.) in the growth medium. Therefore, by controlling the phosphorylation state of HPr, HPrK/P is a sensor enzyme that plays a major role in the regulation of carbon metabolism and sugar transport: it mediates carbon catabolite repression (CCR), and regulates PTS-catalyzed carbohydrate uptake and inducer exclusion. This is HPr kinase/phosphorylase from Exiguobacterium sibiricum (strain DSM 17290 / CCUG 55495 / CIP 109462 / JCM 13490 / 255-15).